An 87-amino-acid polypeptide reads, in one-letter code: Small ribosomal subunit protein bS18 (87 aa).

Belongs to the bacterial ribosomal protein bS18 family. In terms of assembly, part of the 30S ribosomal subunit. Forms a tight heterodimer with protein bS6.

Its function is as follows. Binds as a heterodimer with protein bS6 to the central domain of the 16S rRNA, where it helps stabilize the platform of the 30S subunit. The polypeptide is Small ribosomal subunit protein bS18 (Mesomycoplasma hyopneumoniae (strain 232) (Mycoplasma hyopneumoniae)).